The following is a 346-amino-acid chain: MSSTEEMSSVKNTTQVIGVDPSSTVRVTIVQSSTVYNDTPATLDKAEKFIVEAASKGAKLVLFPEAFIGGYPRGFRFGLAVGVHNEEGRDEFRNYHASAIKVPGPEVERLAELAGKNNVHLVMGAIEKDGYTLYCTALFFSPQGQFLGKHRKVMPTSLERCIWGQGDGSTIPVYDTPIGKIGAAICWENRMPLYRTALYAKGIEIYCAPTADYSLEWQASMIHIAVEGGCFVLSAHQFCKRREFPEHPDYLFNDIVDTKEHDPTVSGGGSVIISPLGKVLAGPNYESEGLVTADLDLGDIARAKLYFDVVGHYSKPDIFNLTVNEHPKKPVTFMTKVEKAEDESNK.

Ser-2 carries the N-acetylserine modification. Positions 25-297 constitute a CN hydrolase domain; sequence VRVTIVQSST…EGLVTADLDL (273 aa). Glu-65 acts as the Proton acceptor in catalysis. Catalysis depends on Lys-152, which acts as the Proton donor. Cys-186 (nucleophile) is an active-site residue.

Belongs to the carbon-nitrogen hydrolase superfamily. Nitrilase family.

The protein resides in the cell membrane. The enzyme catalyses a nitrile + 2 H2O = a carboxylate + NH4(+). Its function is as follows. Can convert indole-3-acetonitrile to the plant hormone indole-3-acetic acid. This is Nitrilase 3 (NIT3) from Arabidopsis thaliana (Mouse-ear cress).